We begin with the raw amino-acid sequence, 254 residues long: Phosphoribosylaminoimidazole-succinocarboxamide synthase (254 aa).

This sequence belongs to the SAICAR synthetase family.

The enzyme catalyses 5-amino-1-(5-phospho-D-ribosyl)imidazole-4-carboxylate + L-aspartate + ATP = (2S)-2-[5-amino-1-(5-phospho-beta-D-ribosyl)imidazole-4-carboxamido]succinate + ADP + phosphate + 2 H(+). It functions in the pathway purine metabolism; IMP biosynthesis via de novo pathway; 5-amino-1-(5-phospho-D-ribosyl)imidazole-4-carboxamide from 5-amino-1-(5-phospho-D-ribosyl)imidazole-4-carboxylate: step 1/2. This is Phosphoribosylaminoimidazole-succinocarboxamide synthase from Gluconobacter oxydans (strain 621H) (Gluconobacter suboxydans).